Reading from the N-terminus, the 204-residue chain is Urease accessory protein UreE (204 aa).

Residues 172–190 (HGHAHSHDHDHDHDHDHQH) show a composition bias toward basic and acidic residues. A disordered region spans residues 172–204 (HGHAHSHDHDHDHDHDHQHGPGCTHGHHGHDHH).

This sequence belongs to the UreE family.

It localises to the cytoplasm. Its function is as follows. Involved in urease metallocenter assembly. Binds nickel. Probably functions as a nickel donor during metallocenter assembly. The polypeptide is Urease accessory protein UreE (Burkholderia orbicola (strain AU 1054)).